The chain runs to 210 residues: RNA chaperone ProQ (210 aa).

Basic and acidic residues-rich tracts occupy residues 103–124 (LKES…EKAK) and 132–144 (RKAD…DKPK). Residues 103-148 (LKESKERVFASRRTNNKEEKAKQPRRPAPRKADAAAKSDKPKAAPK) are disordered.

It belongs to the ProQ family.

It localises to the cytoplasm. Functionally, RNA chaperone with significant RNA binding, RNA strand exchange and RNA duplexing activities. This chain is RNA chaperone ProQ, found in Aeromonas salmonicida (strain A449).